Reading from the N-terminus, the 186-residue chain is Elongation factor P (186 aa).

The protein belongs to the elongation factor P family.

The protein localises to the cytoplasm. It functions in the pathway protein biosynthesis; polypeptide chain elongation. In terms of biological role, involved in peptide bond synthesis. Stimulates efficient translation and peptide-bond synthesis on native or reconstituted 70S ribosomes in vitro. Probably functions indirectly by altering the affinity of the ribosome for aminoacyl-tRNA, thus increasing their reactivity as acceptors for peptidyl transferase. The polypeptide is Elongation factor P (Prochlorococcus marinus (strain MIT 9303)).